Consider the following 520-residue polypeptide: Na(+)/H(+) antiporter NhaB (520 aa).

Helical transmembrane passes span 27 to 49 (GFLI…LLVI), 62 to 82 (YPLL…MTSA), 97 to 117 (LLLI…LLIF), 120 to 140 (LLLG…AAAF), 144 to 164 (FLDA…FYGI), 202 to 222 (LMMH…VGEP), 238 to 258 (FLLR…VTCI), 303 to 323 (GLIG…VGLI), 348 to 368 (TEAL…AVII), 391 to 411 (LFYL…VGTV), 447 to 467 (ATPN…APLI), and 475 to 495 (VWMA…CVQF).

The protein belongs to the NhaB Na(+)/H(+) (TC 2.A.34) antiporter family.

It localises to the cell inner membrane. The enzyme catalyses 2 Na(+)(in) + 3 H(+)(out) = 2 Na(+)(out) + 3 H(+)(in). Functionally, na(+)/H(+) antiporter that extrudes sodium in exchange for external protons. The chain is Na(+)/H(+) antiporter NhaB from Cronobacter sakazakii (strain ATCC BAA-894) (Enterobacter sakazakii).